The primary structure comprises 382 residues: Succinyl-diaminopimelate desuccinylase (382 aa).

A Zn(2+)-binding site is contributed by H72. D74 is an active-site residue. Residue D105 participates in Zn(2+) binding. E139 (proton acceptor) is an active-site residue. Zn(2+) is bound by residues E140, E168, and H354.

Belongs to the peptidase M20A family. DapE subfamily. Homodimer. Zn(2+) serves as cofactor. It depends on Co(2+) as a cofactor.

The enzyme catalyses N-succinyl-(2S,6S)-2,6-diaminopimelate + H2O = (2S,6S)-2,6-diaminopimelate + succinate. Its pathway is amino-acid biosynthesis; L-lysine biosynthesis via DAP pathway; LL-2,6-diaminopimelate from (S)-tetrahydrodipicolinate (succinylase route): step 3/3. In terms of biological role, catalyzes the hydrolysis of N-succinyl-L,L-diaminopimelic acid (SDAP), forming succinate and LL-2,6-diaminopimelate (DAP), an intermediate involved in the bacterial biosynthesis of lysine and meso-diaminopimelic acid, an essential component of bacterial cell walls. In Shewanella amazonensis (strain ATCC BAA-1098 / SB2B), this protein is Succinyl-diaminopimelate desuccinylase.